We begin with the raw amino-acid sequence, 185 residues long: Ribosome-recycling factor (185 aa).

The segment at 135 to 159 (ANDEVKKLEKDKAITEDESKKGQDE) is disordered.

Belongs to the RRF family.

The protein resides in the cytoplasm. Its function is as follows. Responsible for the release of ribosomes from messenger RNA at the termination of protein biosynthesis. May increase the efficiency of translation by recycling ribosomes from one round of translation to another. This Campylobacter curvus (strain 525.92) protein is Ribosome-recycling factor.